Reading from the N-terminus, the 257-residue chain is MKRERNNSLDPLEISEWRWSEFLDDAIKALELFDIEPYPIPEEFLTKEETIKFKNNQIKVKALTWACRTTKIRQARAACIEAGPAASVLNLVINPFHNFELPFFGADFVTLPSGHLLALDLQPVLKKDEIHNQKVWSKLIPIHDHWQSLLPSGGPIPQEAETFFSPGFLWTRLPLDDQGSKLISKVIRPAFQEYLTLYIDLISDAQEVSKERSLEILSGQKAYINYRAEKDPARGMLARFFGKDWTEQYIHKVLFDL.

It belongs to the HY2 family.

The catalysed reaction is (3Z)-phycoerythrobilin + oxidized 2[4Fe-4S]-[ferredoxin] = 15,16-dihydrobiliverdin + reduced 2[4Fe-4S]-[ferredoxin] + 2 H(+). In terms of biological role, catalyzes the two-electron reduction of the C2 and C3(1) diene system of 15,16-dihydrobiliverdin. The polypeptide is Phycoerythrobilin:ferredoxin oxidoreductase (Prochlorococcus marinus (strain MIT 9211)).